Consider the following 252-residue polypeptide: C-type lectin domain family 2 member D3 (252 aa).

The interval 1–58 (MSSSAHLQDAPPLLSGTLTQNEGQTSLRQSSSCGPSAASASESLSGYTESRIPHSKVR) is disordered. Residues 1 to 78 (MSSSAHLQDA…ESRVKRYCCY (78 aa)) lie on the Cytoplasmic side of the membrane. A compositionally biased stretch (polar residues) spans 16 to 29 (GTLTQNEGQTSLRQ). Low complexity predominate over residues 30 to 43 (SSSCGPSAASASES). A helical; Signal-anchor for type II membrane protein membrane pass occupies residues 79 to 99 (GGVITVVAIAIVVPLSVTLSV). Over 100–252 (KQMEQTSINN…KPKKYISQSQ (153 aa)) the chain is Extracellular. The C-type lectin domain occupies 137 to 242 (YGNKCFYFSE…VYVERPWICS (106 aa)). An N-linked (GlcNAc...) asparagine glycan is attached at N150. C158 and C241 are oxidised to a cystine.

It localises to the cell membrane. Functionally, lectin-type cell surface receptor. This is C-type lectin domain family 2 member D3 (Clec2d3) from Rattus norvegicus (Rat).